The sequence spans 159 residues: Cyclic pyranopterin monophosphate synthase (159 aa).

Residues 75–77 and 113–114 each bind substrate; these read LCH and ME. Residue D128 is part of the active site.

Belongs to the MoaC family. As to quaternary structure, homohexamer; trimer of dimers.

The enzyme catalyses (8S)-3',8-cyclo-7,8-dihydroguanosine 5'-triphosphate = cyclic pyranopterin phosphate + diphosphate. Its pathway is cofactor biosynthesis; molybdopterin biosynthesis. In terms of biological role, catalyzes the conversion of (8S)-3',8-cyclo-7,8-dihydroguanosine 5'-triphosphate to cyclic pyranopterin monophosphate (cPMP). The polypeptide is Cyclic pyranopterin monophosphate synthase (Heliobacterium modesticaldum (strain ATCC 51547 / Ice1)).